The primary structure comprises 181 residues: Putative ankyrin repeat protein RF_0782 (181 aa).

ANK repeat units follow at residues 24–53 (YHYS…DINF) and 54–83 (GSTP…NTQI).

The protein is Putative ankyrin repeat protein RF_0782 of Rickettsia felis (strain ATCC VR-1525 / URRWXCal2) (Rickettsia azadi).